Here is a 399-residue protein sequence, read N- to C-terminus: 3-dehydroquinate synthase (399 aa).

Belongs to the archaeal-type DHQ synthase family.

It catalyses the reaction 2-amino-2,3,7-trideoxy-D-lyxo-hept-6-ulosonate + NAD(+) + H2O = 3-dehydroquinate + NH4(+) + NADH + H(+). Catalyzes the oxidative deamination and cyclization of 2-amino-3,7-dideoxy-D-threo-hept-6-ulosonic acid (ADH) to yield 3-dehydroquinate (DHQ), which is fed into the canonical shikimic pathway of aromatic amino acid biosynthesis. The polypeptide is 3-dehydroquinate synthase (Haloquadratum walsbyi (strain DSM 16790 / HBSQ001)).